The following is a 482-amino-acid chain: Dihydrolipoyllysine-residue acetyltransferase component of pyruvate dehydrogenase complex, mitochondrial (482 aa).

Residues 1-28 constitute a mitochondrion transit peptide; it reads MSAFVRVVPRISRSSVLTRSLRLQLRCY. The Lipoyl-binding domain occupies 34 to 110; it reads HTIIGMPALS…PVNKPIAVYV (77 aa). Lys75 is subject to N6-lipoyllysine. The interval 122–170 is disordered; sequence FKLEDSGSDSKTSTKAQPAEPQAEKKQEAPAEETKTSAPEAKKSDVAAP. Residues 143–166 are compositionally biased toward basic and acidic residues; it reads QAEKKQEAPAEETKTSAPEAKKSD. Residues 175–212 enclose the Peripheral subunit-binding (PSBD) domain; it reads FASPLAKTIALEKGISLKDVHGTGPRGRITKADIESYL. A disordered region spans residues 214–251; it reads KSSKQSSQTSGAAAATPAAATSSTTAGSAPSPSSTASY. A compositionally biased stretch (low complexity) spans 217–250; sequence KQSSQTSGAAAATPAAATSSTTAGSAPSPSSTAS. Active-site residues include His455 and Asp459.

It belongs to the 2-oxoacid dehydrogenase family. As to quaternary structure, eukaryotic pyruvate dehydrogenase (PDH) complexes are organized as a core consisting of the oligomeric dihydrolipoamide acetyl-transferase (E2), around which are arranged multiple copies of pyruvate dehydrogenase (E1), dihydrolipoamide dehydrogenase (E3) and protein X (E3BP) bound by non-covalent bonds. (R)-lipoate serves as cofactor.

The protein resides in the mitochondrion matrix. The catalysed reaction is N(6)-[(R)-dihydrolipoyl]-L-lysyl-[protein] + acetyl-CoA = N(6)-[(R)-S(8)-acetyldihydrolipoyl]-L-lysyl-[protein] + CoA. Its function is as follows. The pyruvate dehydrogenase complex catalyzes the overall conversion of pyruvate to acetyl-CoA and CO(2). This chain is Dihydrolipoyllysine-residue acetyltransferase component of pyruvate dehydrogenase complex, mitochondrial (LAT1), found in Saccharomyces cerevisiae (strain ATCC 204508 / S288c) (Baker's yeast).